The primary structure comprises 109 residues: Nucleoid-associated protein VC_1055 (109 aa).

The tract at residues 1–22 (MFGKGGMGNLMKQAQQMQERMQ) is disordered.

Belongs to the YbaB/EbfC family. Homodimer.

It localises to the cytoplasm. The protein localises to the nucleoid. Functionally, binds to DNA and alters its conformation. May be involved in regulation of gene expression, nucleoid organization and DNA protection. This Vibrio cholerae serotype O1 (strain ATCC 39315 / El Tor Inaba N16961) protein is Nucleoid-associated protein VC_1055.